Reading from the N-terminus, the 252-residue chain is 2-succinyl-6-hydroxy-2,4-cyclohexadiene-1-carboxylate synthase (252 aa).

This sequence belongs to the AB hydrolase superfamily. MenH family. In terms of assembly, monomer.

It carries out the reaction 5-enolpyruvoyl-6-hydroxy-2-succinyl-cyclohex-3-ene-1-carboxylate = (1R,6R)-6-hydroxy-2-succinyl-cyclohexa-2,4-diene-1-carboxylate + pyruvate. It functions in the pathway quinol/quinone metabolism; 1,4-dihydroxy-2-naphthoate biosynthesis; 1,4-dihydroxy-2-naphthoate from chorismate: step 3/7. It participates in quinol/quinone metabolism; menaquinone biosynthesis. In terms of biological role, catalyzes a proton abstraction reaction that results in 2,5-elimination of pyruvate from 2-succinyl-5-enolpyruvyl-6-hydroxy-3-cyclohexene-1-carboxylate (SEPHCHC) and the formation of 2-succinyl-6-hydroxy-2,4-cyclohexadiene-1-carboxylate (SHCHC). This is 2-succinyl-6-hydroxy-2,4-cyclohexadiene-1-carboxylate synthase from Salmonella agona (strain SL483).